The following is a 408-amino-acid chain: Tryptophan synthase beta chain (408 aa).

The residue at position 97 (Lys-97) is an N6-(pyridoxal phosphate)lysine.

The protein belongs to the TrpB family. In terms of assembly, tetramer of two alpha and two beta chains. Pyridoxal 5'-phosphate is required as a cofactor.

It carries out the reaction (1S,2R)-1-C-(indol-3-yl)glycerol 3-phosphate + L-serine = D-glyceraldehyde 3-phosphate + L-tryptophan + H2O. It functions in the pathway amino-acid biosynthesis; L-tryptophan biosynthesis; L-tryptophan from chorismate: step 5/5. The beta subunit is responsible for the synthesis of L-tryptophan from indole and L-serine. This Pseudomonas syringae pv. syringae protein is Tryptophan synthase beta chain (trpB).